Consider the following 323-residue polypeptide: ADP/ATP translocase 4 (323 aa).

The Mitochondrial intermembrane portion of the chain corresponds to 1–23 (MQREPPKRKQEKKVEKGLFDATS). A Solcar 1 repeat occupies 22–114 (TSFGKDLLAG…FAFKDKYKQL (93 aa)). Residues 24 to 53 (FGKDLLAGGVAAAVSKTTVAPIERVKLLLQ) form a helical membrane-spanning segment. Over 54–90 (VQASSKQISPEAQYKGIVDCLVRIPREQGFLSYWRGN) the chain is Mitochondrial matrix. A helical transmembrane segment spans residues 91-115 (LANVIRYFPTQALNFAFKDKYKQLF). ADP-binding residues include R96 and K108. The Mitochondrial intermembrane segment spans residues 116–125 (MSGVNKEKQF). A helical membrane pass occupies residues 126–146 (WRWFLANLASGGAAGATSLCV). Solcar repeat units follow at residues 127–217 (RWFL…VKGL) and 224–311 (THFL…IKDL). At 147-194 (VYPLDFARTRLGADIGKGPEERQFKGLGDCIMKIAKSDGIVGLYQGFG) the chain is on the mitochondrial matrix side. Residues 195-215 (VSVQGIIVYRASYFGAYDTVK) form a helical membrane-spanning segment. Residues 216-226 (GLLPKPKETHF) are Mitochondrial intermembrane-facing. A helical transmembrane segment spans residues 227–247 (LVSFFIAQVVTTCSGILSYPF). At 248 to 287 (DTVRRRMMMQSGEAERQYKGTLDCFMKIYQQEGIGAFFRG) the chain is on the mitochondrial matrix side. Residue R251 participates in ADP binding. The important for transport activity stretch occupies residues 251 to 256 (RRRMMM). Positions 251–256 (RRRMMM) match the Nucleotide carrier signature motif motif. The helical transmembrane segment at 288-305 (AFSNILRGTGGALVLVLY) threads the bilayer. At 306–323 (DKIKDLLNIDIGGSSSGD) the chain is on the mitochondrial intermembrane side.

This sequence belongs to the mitochondrial carrier (TC 2.A.29) family. Monomer.

Its subcellular location is the mitochondrion inner membrane. It localises to the membrane. The protein resides in the cell projection. It is found in the cilium. The protein localises to the flagellum membrane. It carries out the reaction ADP(in) + ATP(out) = ADP(out) + ATP(in). It catalyses the reaction dATP(out) + ADP(in) = dATP(in) + ADP(out). The enzyme catalyses dADP(in) + ADP(out) = dADP(out) + ADP(in). The catalysed reaction is H(+)(in) = H(+)(out). The matrix-open state (m-state) is inhibited by the membrane-permeable bongkrekic acid (BKA). The cytoplasmic-open state (c-state) is inhibited by the membrane-impermeable toxic inhibitor carboxyatractyloside (CATR). Proton transporter activity is inhibited by ADP:ATP antiporter activity. Functionally, ADP:ATP antiporter that mediates import of ADP into the mitochondrial matrix for ATP synthesis, and export of ATP out to fuel the cell. Cycles between the cytoplasmic-open state (c-state) and the matrix-open state (m-state): operates by the alternating access mechanism with a single substrate-binding site intermittently exposed to either the cytosolic (c-state) or matrix (m-state) side of the inner mitochondrial membrane. Specifically required during spermatogenesis, probably to mediate ADP:ATP exchange in spermatocytes. Large ATP supplies from mitochondria may be critical for normal progression of spermatogenesis during early stages of meiotic prophase I, including DNA double-strand break repair and chromosomal synapsis. In addition to its ADP:ATP antiporter activity, also involved in mitochondrial uncoupling and mitochondrial permeability transition pore (mPTP) activity. Plays a role in mitochondrial uncoupling by acting as a proton transporter: proton transport uncouples the proton flows via the electron transport chain and ATP synthase to reduce the efficiency of ATP production and cause mitochondrial thermogenesis. Proton transporter activity is inhibited by ADP:ATP antiporter activity, suggesting that SLC25A31/ANT4 acts as a master regulator of mitochondrial energy output by maintaining a delicate balance between ATP production (ADP:ATP antiporter activity) and thermogenesis (proton transporter activity). Proton transporter activity requires free fatty acids as cofactor, but does not transport it. Among nucleotides, may also exchange ADP for dATP and dADP. Also plays a key role in mPTP opening, a non-specific pore that enables free passage of the mitochondrial membranes to solutes of up to 1.5 kDa, and which contributes to cell death. It is however unclear if SLC25A31/ANT4 constitutes a pore-forming component of mPTP or regulates it. In Bos taurus (Bovine), this protein is ADP/ATP translocase 4.